A 435-amino-acid polypeptide reads, in one-letter code: Serine/threonine-protein kinase 40 (435 aa).

Basic and acidic residues predominate over residues 1-10; the sequence is MKRRASDRGA. A disordered region spans residues 1-25; the sequence is MKRRASDRGAGETSARAKALGSGIS. The Protein kinase domain maps to 35–331; that stretch reads FILGPRLGNS…ADVLEALSAI (297 aa). ATP contacts are provided by residues 41–49 and lysine 66; that span reads LGNSPVPSI. The active-site Proton acceptor is arginine 196.

This sequence belongs to the protein kinase superfamily. CAMK Ser/Thr protein kinase family. As to expression, strongly expressed in heart, brain, placenta, lung, skeletal muscle, kidney, spleen, thymus, prostate, liver, pancreas, testis, ovary, small intestine, colon and peripheral blood leukocytes.

The protein resides in the nucleus. It is found in the cytoplasm. The catalysed reaction is L-seryl-[protein] + ATP = O-phospho-L-seryl-[protein] + ADP + H(+). The enzyme catalyses L-threonyl-[protein] + ATP = O-phospho-L-threonyl-[protein] + ADP + H(+). In terms of biological role, may be a negative regulator of NF-kappa-B and p53-mediated gene transcription. In Homo sapiens (Human), this protein is Serine/threonine-protein kinase 40 (STK40).